We begin with the raw amino-acid sequence, 479 residues long: ATP-dependent RNA helicase DDX19B (479 aa).

Residue alanine 2 is modified to N-acetylalanine. Residues 2–300 (ATDSWALAVD…DPNVIKLKRE (299 aa)) form an N-terminal lobe region. Residues 34-54 (TNGAVVKTNANAEKTDEEEKE) are disordered. An N-terminal helix region spans residues 55-68 (DRAAQSLLNKLIRS). A Q motif motif is present at residues 92–120 (KSFEELRLKPQLLQGVYAMGFNRPSKIQE). Residues glutamine 119 and 138 to 145 (SQSGTGKT) contribute to the ATP site. Residues 125–295 (LMLAEPPQNL…QKVVPDPNVI (171 aa)) form the Helicase ATP-binding domain. Positions 242–245 (DEAD) match the DEAD box motif. The C-terminal lobe stretch occupies residues 301-479 (EETLDTIKQY…DLDEIEKIAN (179 aa)). The Helicase C-terminal domain occupies 306-474 (TIKQYYVLCS…RLDTDDLDEI (169 aa)). ATP-binding residues include arginine 429 and arginine 432.

The protein belongs to the DEAD box helicase family. DDX19/DBP5 subfamily. Associates with the nuclear pore complex via interaction with NUP214. Interacts with NUP214 or RNA in a mutually exclusive manner.

It localises to the cytoplasm. The protein localises to the nucleus. Its subcellular location is the nucleoplasm. The catalysed reaction is ATP + H2O = ADP + phosphate + H(+). Functionally, ATP-dependent RNA helicase involved in mRNA export from the nucleus. Rather than unwinding RNA duplexes, DDX19B functions as a remodeler of ribonucleoprotein particles, whereby proteins bound to nuclear mRNA are dissociated and replaced by cytoplasmic mRNA binding proteins. In Homo sapiens (Human), this protein is ATP-dependent RNA helicase DDX19B (DDX19B).